Here is a 314-residue protein sequence, read N- to C-terminus: 4-hydroxy-3-methylbut-2-enyl diphosphate reductase (314 aa).

A [4Fe-4S] cluster-binding site is contributed by C12. Residues H41 and H74 each contribute to the (2E)-4-hydroxy-3-methylbut-2-enyl diphosphate site. The dimethylallyl diphosphate site is built by H41 and H74. Residues H41 and H74 each coordinate isopentenyl diphosphate. C96 lines the [4Fe-4S] cluster pocket. H124 contacts (2E)-4-hydroxy-3-methylbut-2-enyl diphosphate. A dimethylallyl diphosphate-binding site is contributed by H124. Isopentenyl diphosphate is bound at residue H124. Catalysis depends on E126, which acts as the Proton donor. (2E)-4-hydroxy-3-methylbut-2-enyl diphosphate is bound at residue T167. Position 197 (C197) interacts with [4Fe-4S] cluster. (2E)-4-hydroxy-3-methylbut-2-enyl diphosphate contacts are provided by S225, S226, N227, and S269. Residues S225, S226, N227, and S269 each contribute to the dimethylallyl diphosphate site. Isopentenyl diphosphate-binding residues include S225, S226, N227, and S269.

The protein belongs to the IspH family. [4Fe-4S] cluster serves as cofactor.

It catalyses the reaction isopentenyl diphosphate + 2 oxidized [2Fe-2S]-[ferredoxin] + H2O = (2E)-4-hydroxy-3-methylbut-2-enyl diphosphate + 2 reduced [2Fe-2S]-[ferredoxin] + 2 H(+). The enzyme catalyses dimethylallyl diphosphate + 2 oxidized [2Fe-2S]-[ferredoxin] + H2O = (2E)-4-hydroxy-3-methylbut-2-enyl diphosphate + 2 reduced [2Fe-2S]-[ferredoxin] + 2 H(+). Its pathway is isoprenoid biosynthesis; dimethylallyl diphosphate biosynthesis; dimethylallyl diphosphate from (2E)-4-hydroxy-3-methylbutenyl diphosphate: step 1/1. The protein operates within isoprenoid biosynthesis; isopentenyl diphosphate biosynthesis via DXP pathway; isopentenyl diphosphate from 1-deoxy-D-xylulose 5-phosphate: step 6/6. Functionally, catalyzes the conversion of 1-hydroxy-2-methyl-2-(E)-butenyl 4-diphosphate (HMBPP) into a mixture of isopentenyl diphosphate (IPP) and dimethylallyl diphosphate (DMAPP). Acts in the terminal step of the DOXP/MEP pathway for isoprenoid precursor biosynthesis. The polypeptide is 4-hydroxy-3-methylbut-2-enyl diphosphate reductase (Haemophilus influenzae (strain 86-028NP)).